Reading from the N-terminus, the 375-residue chain is Methylthioribose-1-phosphate isomerase (375 aa).

Asp-257 acts as the Proton donor in catalysis.

It belongs to the eIF-2B alpha/beta/delta subunits family. MtnA subfamily.

It localises to the cytoplasm. It is found in the nucleus. The enzyme catalyses 5-(methylsulfanyl)-alpha-D-ribose 1-phosphate = 5-(methylsulfanyl)-D-ribulose 1-phosphate. The protein operates within amino-acid biosynthesis; L-methionine biosynthesis via salvage pathway; L-methionine from S-methyl-5-thio-alpha-D-ribose 1-phosphate: step 1/6. Functionally, catalyzes the interconversion of methylthioribose-1-phosphate (MTR-1-P) into methylthioribulose-1-phosphate (MTRu-1-P). This chain is Methylthioribose-1-phosphate isomerase, found in Leishmania major.